We begin with the raw amino-acid sequence, 512 residues long: PTS system mannitol-specific EIICB component (512 aa).

Topologically, residues 1 to 28 (MSQTEEKKGIGRRVQAFGSFLSSMIMPN) are cytoplasmic. A PTS EIIC type-2 domain is found at 17–349 (FGSFLSSMIM…MKFTKEPKQD (333 aa)). A helical transmembrane segment spans residues 29 to 50 (IGAFIAWGFIAAIFIDNGWFPN). Over 51 to 54 (KDLA) the chain is Extracellular. Residues 55-75 (TLAGPMITYLIPLLIAFSGGR) form a helical membrane-spanning segment. Topologically, residues 76–139 (LIYDLRGGII…QGFEMLFNNF (64 aa)) are cytoplasmic. A helical membrane pass occupies residues 140-161 (SAGILGFIMTIAGFKILAPLMK). Over 162–170 (FIMHILSVA) the chain is Extracellular. A helical membrane pass occupies residues 171–191 (VEALVHAHLLPLVSILVEPAK). Residues 192-278 (IVFLNNAINH…VLMRPLLFIA (87 aa)) lie on the Cytoplasmic side of the membrane. The chain crosses the membrane as a helical span at residues 279–298 (VILGGMTGVATYQATGFGFK). Residues 299-318 (SPASPGSFIVYCLNAPRGEF) are Extracellular-facing. Residues 319–340 (LHMLLGVFLATLVSFVVAALIM) traverse the membrane as a helical segment. The Cytoplasmic segment spans residues 341–512 (KFTKEPKQDL…LNNLKKDDQA (172 aa)). Residues 365–376 (SSVASKLVSSDK) show a composition bias toward low complexity. Residues 365 to 401 (SSVASKLVSSDKNVNTEENASGNVSETSSLDDDPEAL) are disordered. Polar residues predominate over residues 380 to 392 (TEENASGNVSETS). Positions 419 to 512 (NHVIFACDAG…LNNLKKDDQA (94 aa)) constitute a PTS EIIB type-2 domain. The active-site Phosphocysteine intermediate; for EIIB activity is the C425. C425 carries the phosphocysteine; by EIIA modification.

In terms of assembly, homodimer.

The protein localises to the cell membrane. The catalysed reaction is D-mannitol(out) + N(pros)-phospho-L-histidyl-[protein] = D-mannitol 1-phosphate(in) + L-histidyl-[protein]. Functionally, the phosphoenolpyruvate-dependent sugar phosphotransferase system (sugar PTS), a major carbohydrate active transport system, catalyzes the phosphorylation of incoming sugar substrates concomitantly with their translocation across the cell membrane. The enzyme II CmtAB PTS system is involved in D-mannitol transport. This is PTS system mannitol-specific EIICB component (mtlA) from Staphylococcus aureus (strain MRSA252).